The sequence spans 88 residues: Small ribosomal subunit protein bS16 (88 aa).

The protein belongs to the bacterial ribosomal protein bS16 family.

In Anaeromyxobacter dehalogenans (strain 2CP-1 / ATCC BAA-258), this protein is Small ribosomal subunit protein bS16.